Consider the following 70-residue polypeptide: Phycobilisome 8.1 kDa linker polypeptide, phycocyanin-associated, rod (70 aa).

The CpcD-like domain occupies 5–63 (SRSFQVEVSGLHQNEVTNQNNYPIRSSGSVFITIPFSRFNEELQRINRLGGKIVNIQPL).

Belongs to the phycobilisome linker protein family.

Its subcellular location is the cellular thylakoid membrane. Its function is as follows. Rod linker protein, associated with phycocyanin. Linker polypeptides determine the state of aggregation and the location of the disk-shaped phycobiliprotein units within the phycobilisome and modulate their spectroscopic properties in order to mediate a directed and optimal energy transfer. The chain is Phycobilisome 8.1 kDa linker polypeptide, phycocyanin-associated, rod (cpcD3) from Microchaete diplosiphon (Fremyella diplosiphon).